A 197-amino-acid polypeptide reads, in one-letter code: MSTNFIYPNAHLIAGVDEVGRGPLVGAVVTAAVILAPNNPIEGLADSKKLSEKKRLLLAEEIKAKALCWSLGRAEPEEIDRLNILHATMLAMQRAVAGLNIQPDFVLVDGNRIPTLPMPAQAVIKGDSLVAEISAASILAKVARDQEMAELDVQYPEYGFAKHKGYPTKLHFEKLEQFGATPFHRKSFAPVKKILGL.

Positions 11–197 (HLIAGVDEVG…FAPVKKILGL (187 aa)) constitute an RNase H type-2 domain. 3 residues coordinate a divalent metal cation: Asp-17, Glu-18, and Asp-109.

It belongs to the RNase HII family. Requires Mn(2+) as cofactor. It depends on Mg(2+) as a cofactor.

It is found in the cytoplasm. The enzyme catalyses Endonucleolytic cleavage to 5'-phosphomonoester.. Endonuclease that specifically degrades the RNA of RNA-DNA hybrids. This is Ribonuclease HII from Actinobacillus pleuropneumoniae serotype 5b (strain L20).